The sequence spans 75 residues: METTVFLSNRSQAVRLPKAVALPENVKRVEVIAVGRTRIITPAGETWDEWFDGNSVSADFMDNREQPGMQERESF.

One can recognise a SpoVT-AbrB domain in the interval Thr3–Glu45.

Belongs to the VapB family.

This is an uncharacterized protein from Escherichia coli (strain K12).